The primary structure comprises 61 residues: MATKTLKVTQTKSSIGRLPKHRATLTGLGLRRINHTVELEDTPSVRGMINKVYYMVSVEEV.

Belongs to the universal ribosomal protein uL30 family. In terms of assembly, part of the 50S ribosomal subunit.

The chain is Large ribosomal subunit protein uL30 from Shewanella piezotolerans (strain WP3 / JCM 13877).